We begin with the raw amino-acid sequence, 198 residues long: Dynactin subunit 5 (198 aa).

The span at 179–188 shows a compositional bias: polar residues; sequence NTPASKGLPS. Residues 179–198 form a disordered region; the sequence is NTPASKGLPSTPTKLQTTTT. The span at 189–198 shows a compositional bias: low complexity; the sequence is TPTKLQTTTT.

The protein belongs to the dynactin subunits 5/6 family. Dynactin subunit 5 subfamily. As to quaternary structure, member of the pointed-end complex of the dynactin shoulder complex.

It localises to the cytoplasm. The protein localises to the cytoskeleton. This chain is Dynactin subunit 5 (dynE), found in Dictyostelium discoideum (Social amoeba).